We begin with the raw amino-acid sequence, 103 residues long: Large ribosomal subunit protein uL24 (103 aa).

Belongs to the universal ribosomal protein uL24 family. In terms of assembly, part of the 50S ribosomal subunit.

Functionally, one of two assembly initiator proteins, it binds directly to the 5'-end of the 23S rRNA, where it nucleates assembly of the 50S subunit. One of the proteins that surrounds the polypeptide exit tunnel on the outside of the subunit. This chain is Large ribosomal subunit protein uL24, found in Listeria monocytogenes serotype 4a (strain HCC23).